The sequence spans 321 residues: Transaldolase (321 aa).

Lysine 132 functions as the Schiff-base intermediate with substrate in the catalytic mechanism.

It belongs to the transaldolase family. Type 1 subfamily. In terms of assembly, homodimer.

The protein localises to the cytoplasm. It carries out the reaction D-sedoheptulose 7-phosphate + D-glyceraldehyde 3-phosphate = D-erythrose 4-phosphate + beta-D-fructose 6-phosphate. Its pathway is carbohydrate degradation; pentose phosphate pathway; D-glyceraldehyde 3-phosphate and beta-D-fructose 6-phosphate from D-ribose 5-phosphate and D-xylulose 5-phosphate (non-oxidative stage): step 2/3. Its function is as follows. Transaldolase is important for the balance of metabolites in the pentose-phosphate pathway. The sequence is that of Transaldolase from Rhizobium leguminosarum bv. trifolii (strain WSM2304).